The chain runs to 421 residues: Thymidine phosphorylase (421 aa).

The protein belongs to the thymidine/pyrimidine-nucleoside phosphorylase family. Homodimer.

The catalysed reaction is thymidine + phosphate = 2-deoxy-alpha-D-ribose 1-phosphate + thymine. Its function is as follows. The enzymes which catalyze the reversible phosphorolysis of pyrimidine nucleosides are involved in the degradation of these compounds and in their utilization as carbon and energy sources, or in the rescue of pyrimidine bases for nucleotide synthesis. This chain is Thymidine phosphorylase (deoA), found in Mycoplasma genitalium (strain ATCC 33530 / DSM 19775 / NCTC 10195 / G37) (Mycoplasmoides genitalium).